The sequence spans 436 residues: MFDSTLNPLWQRYILAVQEEVKPALGCTEPISLALAAAVAAAELEGPVERVEAWVSPNLMKNGLGVTVPGTGMVGLPIAAALGALGGNANAGLEVLKDATAQAISDAKALLAAGKVSVKIQEPCDEILFSRAKVWNGEKWACVTIVGGHTNIVHIETHNGVVFTQQACVTEGEQESPLTVLSRTTLAEILKFVNEVPFAAIRFILDSAKLNCALSQEGLSGNWGLHIGATLEKQCARGLLAKDLSSSIVIRTSAASDARMGGATLPAMSNSGSGNQGITATMPVVVVAEHFGADDERLARALMLSHLSAIYIHNQLPRLSALCAATTAAMGAAAGMAWLVDGRYETISMAISSMIGDVSGMICDGASNSCAMKVSTSASAAWKAVLMALDDTAVTGNEGIVAHDVEQSIANLCALASHSMQQTDRQIIEIMASKAR.

It belongs to the UPF0597 family.

This Escherichia coli O45:K1 (strain S88 / ExPEC) protein is UPF0597 protein YhaM.